The primary structure comprises 510 residues: MSVQTTYSPVNQDEQVHDGLASRHVSCEGAPSDDSPYALSSLDHNPLGINVSFLLCFHAAQPEEGIRVLEDGINQLLKAHPFLAGDVTRPTRLSQRTNTMQIEPDAPESLLKIPMLQIRHHPATSIEELESKRLLPGAEEQEIIRQLAPLPIDMDLSLPQRPVLRFQANIMRDGVILAMTFHHAAMDGAGAARVLGLLADYCRDPAAPSVGVIPDRQLRSQIDRLATGCSPSASRADFSQHYCGLGDWAALLAENWPGFLQARATELVTWRLTIPGFKVQYLKGACNALLQGQTSALAGGTLTPTILSNNDIVSALMAMILRQAGQLAGKSTELSIAVDMRPSFHAPAFNNYLGNMVLLTYTPIPAAKDQAPVDGPRPPTELRQEDLEELTGIAARIRQSLLKVDAEYIQGVLSHLHSQTDWANIGFRGVPIPLSSFRNFEMIGLDFGETLGSQPRGFQLHLPVLGGMCFVLPKRQDRTEPWDLHLTLHRDDVSRIANDPLFRWAAGEHF.

The protein belongs to the fumigaclavine B O-acetyltransferase family.

It functions in the pathway secondary metabolite biosynthesis; terpenoid biosynthesis. In terms of biological role, O-acetyltransferase; part of the gene cluster that mediates the biosynthesis of pyripyropene A, a specific human acyl-coenzyme A:cholesterol acyltransferase 2 inhibitor. The first step of the pathway is the synthesis of nicotinyl-CoA from nicotinic acid by the nicotinic acid-CoA ligase pyr1. Nicotinyl-CoA is then a substrate of polyketide synthase pyr2 to produce 4-hydroxy-6-(3-pyridinyl)-2H-pyran-2-one (HPPO) which is further prenylated by the polyprenyl transferase pyr6 to yield farnesyl-HPPO. The next steps consist of an epoxidation of farnesyl-HPPO to epoxyfarnesyl-HPPO by FAD-dependent monooxygenase pyr5 and a cyclization of the terpenoid portion by the terpene cyclase pyr4 to yield deacetyl-pyripyropene E. The 2 cytochrome P450 monooxygenases pyr3 and pyr9, and the 2 acetyltransferases pyr7 and pyr8 are involved in the conversion of deacetyl-pyripyropene E into pyripyropene A through several cycles of oxidation and acetylation steps. Pyr7 acetylates deacetyl-pyripyropene E to pyripyropene E which is oxidized to 11-deacetyl-pyripyropene O by pyr3, which is in turn acetylated into pyripyropene O by pyr8. Pyripyropene O is then oxidized to deacetyl-pyripyropene A by pyr9. Deacetyl-pyripyropene A is finally acetylated to pyripyropene A by pyr8. The protein is O-acetyltransferase pyr7 of Aspergillus fumigatus (strain ATCC MYA-4609 / CBS 101355 / FGSC A1100 / Af293) (Neosartorya fumigata).